An 805-amino-acid polypeptide reads, in one-letter code: Muscarinic acetylcholine receptor DM1 (805 aa).

Residues 1 to 100 (MEPVMSLALA…GFETKGPRYS (100 aa)) are Extracellular-facing. A compositionally biased stretch (low complexity) spans 27 to 43 (TSTTTTTTTTTSTTTTT). The disordered stretch occupies residues 27–47 (TSTTTTTTTTTSTTTTTASPA). N65, N84, and N87 each carry an N-linked (GlcNAc...) asparagine glycan. Residues 101–121 (LASMVVMGFVAAILSTVTVAG) traverse the membrane as a helical segment. At 122-141 (NVMVMISFKIDKQLQTISNY) the chain is on the cytoplasmic side. The helical transmembrane segment at 142 to 162 (FLFSLAIADFAIGAISMPLFA) threads the bilayer. Residues 163-177 (VTTILGYWPLGPIVC) lie on the Extracellular side of the membrane. The chain crosses the membrane as a helical span at residues 178–198 (DTWLALDYLASNASVLNLLII). The Cytoplasmic portion of the chain corresponds to 199–220 (SFDRYFSVTRPLTYRAKRTTNR). The helical transmembrane segment at 221-241 (AAVMIGAAWGISLLLWPPWIY) threads the bilayer. The Extracellular portion of the chain corresponds to 242-266 (SWPYIEGKRTVPKDECYIQFIETNQ). The helical transmembrane segment at 267–287 (YITFGTALAAFYFPVTIMCFL) threads the bilayer. Residues 288-718 (YWRIWRETKK…KRQESKAAKT (431 aa)) are Cytoplasmic-facing. 3 disordered regions span residues 302–322 (LPNL…SDEN), 340–359 (GNDH…DAES), and 507–530 (GNGN…VNGN). 2 stretches are compositionally biased toward basic and acidic residues: residues 308-318 (GKKDSSKRSNS) and 341-353 (NDHD…RSES). A compositionally biased stretch (low complexity) spans 507–525 (GNGNGAINNNNNASHNGNG). Residues 719–739 (LSAILLSFIITWTPYNILVLI) form a helical membrane-spanning segment. The Extracellular segment spans residues 740–752 (KPLTTCSDCIPTE). Residues 753–773 (LWDFFYALCYINSTINPMCYA) form a helical membrane-spanning segment. The Cytoplasmic portion of the chain corresponds to 774–805 (LCNATFRRTYVRILTCKWHTRNREGMVRGVYN).

It belongs to the G-protein coupled receptor 1 family. Muscarinic acetylcholine receptor subfamily. Intense staining in the glomeruli of the antennal lobes, the region of the nervous system containing terminals of antennal olfactory sensory neurons and mechanosensory neurons. Also a discrete group of neurosecretory cells in the pars intercerebralis of the brain.

Its subcellular location is the cell membrane. It localises to the postsynaptic cell membrane. In terms of biological role, the muscarinic acetylcholine receptor mediates various cellular responses, including inhibition of adenylate cyclase, breakdown of phosphoinositides and modulation of potassium channels through the action of G proteins. Primary transducing effect is Pi turnover. May have a role in the processing of olfactory and mechanosensory signals; regulation of neurosecretion. This is Muscarinic acetylcholine receptor DM1 (mAChR-A) from Drosophila melanogaster (Fruit fly).